Consider the following 419-residue polypeptide: RNA polymerase sigma factor sigD, chloroplastic (419 aa).

The N-terminal 52 residues, 1–52 (MATTIPTTATATMCPSPPVPTISPLLRTTHQCQPSPSLSSPFSIKLSTALVC), are a transit peptide targeting the chloroplast. The Polymerase core binding signature appears at 207-220 (DLIQEGSIGLLRGA). The segment at residues 377–396 (FEEIGKSLKLSRERVRQING) is a DNA-binding region (H-T-H motif).

This sequence belongs to the sigma-70 factor family. Mostly expressed in leaves, and to a lesser extent in roots. Present in seedlings.

The protein localises to the plastid. Its subcellular location is the chloroplast. Its function is as follows. Sigma factors are initiation factors that promote the attachment of plastid-encoded RNA polymerase (PEP) to specific initiation sites and are then released. Regulates transcription of the ndhF gene which codes for a subunit of the plastid NDH [NAD(P)H dehydrogenase] complex. The polypeptide is RNA polymerase sigma factor sigD, chloroplastic (SIGD) (Arabidopsis thaliana (Mouse-ear cress)).